The primary structure comprises 662 residues: Sodium/glucose cotransporter 1 (662 aa).

At 1 to 24 (MDSSTWSPATTATTEPLKPHERIR) the chain is on the extracellular side. Residues 25–47 (NAADISVIVIYFVVVMAVGLWAM) form a helical membrane-spanning segment. The Cytoplasmic segment spans residues 48–66 (CSTNRGTVGGFFLAGRSMV). The chain crosses the membrane as a helical span at residues 67 to 90 (WWPVGASLFASNIGSGHFVGLAGT). Residues 91 to 95 (GAAAG) lie on the Extracellular side of the membrane. Residues 96-117 (IATGGFEWNALIWVVVLGWLFV) traverse the membrane as a helical segment. Residues 118–139 (PIYIKAGVVTMPEYLRKRFGGK) lie on the Cytoplasmic side of the membrane. The helical transmembrane segment at 140-169 (RIQVYLSILSLMLYIFTKISADIFSGAIFI) threads the bilayer. Residues 170–176 (TLALGLD) are Extracellular-facing. The chain crosses the membrane as a helical span at residues 177-193 (LYLAIFLLLAITGLYTI). The Cytoplasmic portion of the chain corresponds to 194 to 202 (TGGLAAVIY). The helical transmembrane segment at 203 to 221 (TDTLQTAIMLVGSFILTGF) threads the bilayer. Over 222-275 (AFHEVGGYDAFMEKYMNAIPTVISDGNITIKKECYTPRADSFHIFRDPLKGDLP) the chain is Extracellular. N-linked (GlcNAc...) asparagine glycosylation is present at N248. 5 disulfides stabilise this stretch: C255–C511, C255–C608, C345–C351, C355–C361, and C517–C522. The chain crosses the membrane as a helical span at residues 276 to 295 (WPGLTFGLSILALWYWCTDQ). The Cytoplasmic segment spans residues 296–309 (VIVQRCLSAKNMSH). The chain crosses the membrane as a helical span at residues 310 to 331 (VKAGCVMCGYFKLLPMFVIVMP). Topologically, residues 332-375 (GMISRVLYTEKIACTVPSECEKYCGTKVGCSNIAYPTLVVELMP) are extracellular. A helical membrane pass occupies residues 376–406 (NGLRGLMLSVMLASLMSSLTSIFNSASTLFT). Residues 407 to 422 (MDVYTKIRKRASEKEL) are Cytoplasmic-facing. A helical transmembrane segment spans residues 423 to 444 (MIAGRLFILVLIGISIAWVPIV). Residues 445-451 (QSAQSGQ) lie on the Extracellular side of the membrane. A helical transmembrane segment spans residues 452 to 477 (LFDYIQSVTSYLGPPIAAVFLLAIFC). Over 478–481 (KRVN) the chain is Cytoplasmic. The chain crosses the membrane as a helical span at residues 482–504 (EEGAFWGLVIGCMIGLARMITEF). The Extracellular segment spans residues 505 to 525 (AYGTGSCVEPSNCPTIICGVH). Residues 526 to 547 (YLYFAIILFVISIIIVLVVSLF) traverse the membrane as a helical segment. The Cytoplasmic segment spans residues 548-642 (TKPIPDVHLY…TSEKPLWRTV (95 aa)). T587 carries the phosphothreonine modification. Residues 643–660 (VNINGIILLTVAVFCHAY) form a helical membrane-spanning segment. Residues 661–662 (FA) are Extracellular-facing.

This sequence belongs to the sodium:solute symporter (SSF) (TC 2.A.21) family. In terms of processing, N-glycosylation is not necessary for the cotransporter function.

Its subcellular location is the apical cell membrane. The enzyme catalyses D-glucose(out) + 2 Na(+)(out) = D-glucose(in) + 2 Na(+)(in). It carries out the reaction D-galactose(out) + 2 Na(+)(out) = D-galactose(in) + 2 Na(+)(in). With respect to regulation, enhanced by the interaction with PDZK1IP1/MAP17; but unlike SLC5A2/SGLT2, PDZK1IP1 is not essential for SLC5A1 transporter activity. Possibly modulated by cholesterol binding. Electrogenic Na(+)-coupled sugar symporter that actively transports D-glucose or D-galactose at the plasma membrane, with a Na(+) to sugar coupling ratio of 2:1. Transporter activity is driven by a transmembrane Na(+) electrochemical gradient set by the Na(+)/K(+) pump. Has a primary role in the transport of dietary monosaccharides from enterocytes to blood. Responsible for the absorption of D-glucose or D-galactose across the apical brush-border membrane of enterocytes, whereas basolateral exit is provided by GLUT2. Additionally, functions as a D-glucose sensor in enteroendocrine cells, triggering the secretion of the incretins GCG and GIP that control food intake and energy homeostasis. Together with SGLT2, functions in reabsorption of D-glucose from glomerular filtrate, playing a nonredundant role in the S3 segment of the proximal tubules. Transports D-glucose into endometrial epithelial cells, controlling glycogen synthesis and nutritional support for the embryo as well as the decidual transformation of endometrium prior to conception. Acts as a water channel enabling passive water transport in response to the osmotic gradient created upon sugar and Na(+) uptake. Has high water conductivity comparable to aquaporins and therefore is expected to play an important role in transepithelial water permeability, especially in the small intestine. The sequence is that of Sodium/glucose cotransporter 1 (SLC5A1) from Sus scrofa (Pig).